Consider the following 261-residue polypeptide: Early E1A protein (261 aa).

An interaction with RB1 in competition with E2F1 region spans residues 43-51 (PTLHDLYDL). Residues 78 to 149 (EGLDINPPPE…VNEGVKAASD (72 aa)) are interaction with UBE2I. The short motif at 106–110 (PDLGA) is the PXLXP motif, interaction with host ZMYND11 element. The short motif at 115–119 (LRCYE) is the LXCXE motif, interaction with host RB1 and TMEM173/STING element. Residues 163–183 (CKSCEFHRNNTGMKELLCSLC) fold into a zinc finger. A disordered region spans residues 197 to 261 (SDDESPSPDS…DLSTRKLPRQ (65 aa)). Low complexity predominate over residues 203–212 (SPDSTTSPPE). A PXDLS motif, CTBP-binding motif is present at residues 250–254 (PLDLS). Residues 256 to 261 (RKLPRQ) carry the Nuclear localization signal motif.

This sequence belongs to the adenoviridae E1A protein family. In terms of assembly, interacts with host UBE2I; this interaction interferes with polySUMOylation. Interacts with host RB1; this interaction induces the aberrant dissociation of RB1-E2F1 complex thereby disrupting the activity of RB1 and activating E2F1-regulated genes. Interacts with host ATF7; the interaction enhances ATF7-mediated viral transactivation activity which requires the zinc binding domains of both proteins. Isoform early E1A 32 kDa protein and isoform early E1A 26 kDa protein interact (via N-terminus) with CUL1 and E3 ubiquitin ligase RBX1; these interactions inhibit RBX1-CUL1-dependent elongation reaction of ubiquitin chains and attenuate ubiquitination of SCF(FBXW7) target proteins. Interacts (via PXLXP motif) with host ZMYND11/BS69 (via MYND-type zinc finger); this interaction inhibits E1A mediated transactivation. Interacts with host EP300; this interaction stimulates the acetylation of RB1 by recruiting EP300 and RB1 into a multimeric-protein complex. Interacts with host CTBP1 and CTBP2; this interaction seems to potentiate viral replication. Interacts with host DCAF7. Interacts with host DYRK1A. Interacts with host KPNA4; this interaction allows E1A import into the host nucleus. Interacts with host EP400; this interaction stabilizes MYC. Interacts with host TBP protein; this interaction probably disrupts the TBP-TATA complex. Interacts (via LXCXE motif) with host TMEM173/STING; this interaction impairs the ability of TMEM173/STING to sense cytosolic DNA and promote the production of type I interferon (IFN-alpha and IFN-beta). Interacts (via C-terminus) with host ZBED1/hDREF (via C-terminus); the interaction is direct.

The protein localises to the host nucleus. Plays a role in viral genome replication by driving entry of quiescent cells into the cell cycle. Stimulation of progression from G1 to S phase allows the virus to efficiently use the cellular DNA replicating machinery to achieve viral genome replication. E1A protein has both transforming and trans-activating activities. Induces the disassembly of the E2F1 transcription factor from RB1 by direct competition for the same binding site on RB1, with subsequent transcriptional activation of E2F1-regulated S-phase genes and of the E2 region of the adenoviral genome. Release of E2F1 leads to the ARF-mediated inhibition of MDM2 and causes TP53/p53 to accumulate because it is not targeted for degradation by MDM2-mediated ubiquitination anymore. This increase in TP53, in turn, would arrest the cell proliferation and direct its death but this effect is counteracted by the viral protein E1B-55K. Inactivation of the ability of RB1 to arrest the cell cycle is critical for cellular transformation, uncontrolled cellular growth and proliferation induced by viral infection. Interaction with RBX1 and CUL1 inhibits ubiquitination of the proteins targeted by SCF(FBXW7) ubiquitin ligase complex, and may be linked to unregulated host cell proliferation. The tumorigenesis-restraining activity of E1A may be related to the disruption of the host CtBP-CtIP complex through the CtBP binding motif. Interaction with host TMEM173/STING impairs the ability of TMEM173/STING to sense cytosolic DNA and promote the production of type I interferon (IFN-alpha and IFN-beta). Promotes the sumoylation of host ZBED1/hDREF with SUMO1. This is Early E1A protein from Human adenovirus B serotype 7 (HAdV-7).